The sequence spans 381 residues: Prolargin (381 aa).

The first 21 residues, 1 to 21 (MRSSLCWLLTLLLILATAAQG), serve as a signal peptide directing secretion. Residues 19–65 (AQGQPTRRPRPRPRPRPRPRLRPTPSFPQPDEPTEPTDLPPPLPPGP) are disordered. Residues 25 to 39 (RRPRPRPRPRPRPRL) are compositionally biased toward basic residues. Over residues 56-65 (DLPPPLPPGP) the composition is skewed to pro residues. 12 LRR repeats span residues 94–113 (RKVP…NNFI), 114–137 (TELP…NNRI), 138–161 (RKVD…KNQL), 162–182 (EEVP…QNQI), 183–206 (SRIP…HNKL), 207–232 (SDGV…HNTL), 233–253 (RKMP…SNRI), 254–277 (EAIP…YNQL), 278–302 (SDRG…HNRI), 303–322 (SSVP…NNSI), 323–361 (EKIN…GNYL), and 362–381 (KPPI…SVVI). A glycan (N-linked (GlcNAc...) asparagine) is linked at Asn-123. 3 N-linked (GlcNAc...) asparagine glycosylation sites follow: Asn-288, Asn-319, and Asn-326. An intrachain disulfide couples Cys-331 to Cys-372.

It belongs to the small leucine-rich proteoglycan (SLRP) family. SLRP class II subfamily. In terms of assembly, binds the basement membrane heparan sulfate proteoglycan perlecan and triple helical collagens type I and type II. Glycosylated; contains heparan sulfate.

The protein localises to the secreted. Its subcellular location is the extracellular space. It is found in the extracellular matrix. May anchor basement membranes to the underlying connective tissue. This Bos taurus (Bovine) protein is Prolargin (PRELP).